Reading from the N-terminus, the 276-residue chain is UPF0761 membrane protein APL_1950 (276 aa).

The next 7 membrane-spanning stretches (helical) occupy residues 33-53 (TLAIVPLVMVVFSIFTAFPIF), 90-110 (MGIVSTIGLVVVALMLIQSID), 125-145 (IFISFLLYAVILFIAPLLAGG), 147-167 (IAISSYIFSMAIFNENGLLSF), 171-191 (LLQYTPFLLIWLLFTTVYWLV), 203-223 (LGAIVAAIFFTLGKQAFVWYI), and 239-259 (LPIMLLWIHLSWQVVLFGGLI).

The protein belongs to the UPF0761 family.

It localises to the cell inner membrane. The polypeptide is UPF0761 membrane protein APL_1950 (Actinobacillus pleuropneumoniae serotype 5b (strain L20)).